The chain runs to 179 residues: Zinc finger HIT domain-containing protein 3 (179 aa).

Cys-11, Cys-14, Cys-22, Cys-25, Cys-30, Cys-34, His-38, and Cys-49 together coordinate Zn(2+). The HIT-type zinc-finger motif lies at Cys-11–Cys-49. Ser-104 carries the phosphoserine modification.

In terms of assembly, thyroid receptor interacting proteins (TRIPs) specifically interact with the ligand binding domain of the thyroid receptor (TR). Requires the presence of thyroid hormone for its interaction. Interacts with NUFIP1. Interacts (via HIT-type zinc finger) with the RUVBL1/RUVBL2 complex in the presence of ADP.

It is found in the cytoplasm. Its subcellular location is the nucleus. In Bos taurus (Bovine), this protein is Zinc finger HIT domain-containing protein 3 (ZNHIT3).